The primary structure comprises 316 residues: Neuroguidin (316 aa).

2 disordered regions span residues 143 to 172 and 280 to 316; these read SEAD…VKKY and SALT…RKRH. The span at 145-157 shows a compositional bias: acidic residues; that stretch reads ADEGESDSGEDCA. The span at 297–316 shows a compositional bias: basic residues; it reads KKSRKGPKKSKKRKGFRKRH.

Belongs to the SAS10 family. As to quaternary structure, part of the small subunit (SSU) processome, composed of more than 70 proteins and the RNA chaperone small nucleolar RNA (snoRNA) U3.

The protein localises to the nucleus. It is found in the nucleolus. The protein resides in the chromosome. Its subcellular location is the centromere. It localises to the cytoplasm. The protein localises to the cell projection. It is found in the axon. The protein resides in the dendrite. Its subcellular location is the filopodium. Part of the small subunit (SSU) processome, first precursor of the small eukaryotic ribosomal subunit. During the assembly of the SSU processome in the nucleolus, many ribosome biogenesis factors, an RNA chaperone and ribosomal proteins associate with the nascent pre-rRNA and work in concert to generate RNA folding, modifications, rearrangements and cleavage as well as targeted degradation of pre-ribosomal RNA by the RNA exosome. Its dissociation from the complex determines the transition from state pre-A1 to state pre-A1*. May inhibit mRNA translation. The sequence is that of Neuroguidin (ngdn) from Xenopus tropicalis (Western clawed frog).